The chain runs to 283 residues: Bifunctional protein FolD (283 aa).

Residues 164–166, Ser-189, and Ile-230 contribute to the NADP(+) site; that span reads GRS.

It belongs to the tetrahydrofolate dehydrogenase/cyclohydrolase family. Homodimer.

It carries out the reaction (6R)-5,10-methylene-5,6,7,8-tetrahydrofolate + NADP(+) = (6R)-5,10-methenyltetrahydrofolate + NADPH. The catalysed reaction is (6R)-5,10-methenyltetrahydrofolate + H2O = (6R)-10-formyltetrahydrofolate + H(+). Its pathway is one-carbon metabolism; tetrahydrofolate interconversion. Functionally, catalyzes the oxidation of 5,10-methylenetetrahydrofolate to 5,10-methenyltetrahydrofolate and then the hydrolysis of 5,10-methenyltetrahydrofolate to 10-formyltetrahydrofolate. This is Bifunctional protein FolD from Lacticaseibacillus casei (strain BL23) (Lactobacillus casei).